The sequence spans 204 residues: Peptidyl-tRNA hydrolase (204 aa).

Tyr-14 is a binding site for tRNA. The active-site Proton acceptor is the His-19. Residues Tyr-64, Asn-66, and Asn-112 each coordinate tRNA.

The protein belongs to the PTH family. In terms of assembly, monomer.

It is found in the cytoplasm. The enzyme catalyses an N-acyl-L-alpha-aminoacyl-tRNA + H2O = an N-acyl-L-amino acid + a tRNA + H(+). Hydrolyzes ribosome-free peptidyl-tRNAs (with 1 or more amino acids incorporated), which drop off the ribosome during protein synthesis, or as a result of ribosome stalling. In terms of biological role, catalyzes the release of premature peptidyl moieties from peptidyl-tRNA molecules trapped in stalled 50S ribosomal subunits, and thus maintains levels of free tRNAs and 50S ribosomes. This Nitrobacter hamburgensis (strain DSM 10229 / NCIMB 13809 / X14) protein is Peptidyl-tRNA hydrolase.